Consider the following 471-residue polypeptide: Ubiquitin carboxyl-terminal hydrolase calypso (471 aa).

The UCH catalytic domain maps to 45 to 276; that stretch reads GWLELESDPG…IRFNLMAVVP (232 aa). C131 (nucleophile) is an active-site residue. H213 serves as the catalytic Proton donor. Residues 375–403 form the ULD domain; sequence NYDKFICTFLSMLAHQGVLGELVSQHLLP. A positively charged C-terminal tail required for binding nucleosomes region spans residues 405 to 471; that stretch reads KKVSGQGAAN…KGRNKCRKRK (67 aa). Residues 410–471 are disordered; the sequence is QGAANRISKQ…KGRNKCRKRK (62 aa). Low complexity predominate over residues 420-447; that stretch reads STTASAGGSTTGATASTPKTQQQQAAAA. Basic residues predominate over residues 457–471; sequence PGRRRKGRNKCRKRK.

Belongs to the peptidase C12 family. BAP1 subfamily. In terms of assembly, catalytic component of the polycomb repressive deubiquitinase (PR-DUB) complex, at least composed of caly/calypso, Asx and sba (MBD5/6 homolog). The PR-DUB complex associates with nucleosomes to mediate deubiquitination of histone H2AK118ub1 substrates; the association requires the positively charged C-terminal tail of caly, probably due to direct binding of DNA. Interacts (via ULD domain) with Asx (via DEUBAD domain); the interaction produces a stable heterodimer with a composite binding site for ubiquitin. Homodimerizes (via coiled-coil hinge-region between the UCH and ULD domains) to mediate assembly of 2 copies of the caly-Asx heterodimer into a bisymmetric tetramer; dimerization enhances PR-DUB association with nucleosomes.

Its subcellular location is the nucleus. It carries out the reaction Thiol-dependent hydrolysis of ester, thioester, amide, peptide and isopeptide bonds formed by the C-terminal Gly of ubiquitin (a 76-residue protein attached to proteins as an intracellular targeting signal).. In terms of biological role, catalytic component of the polycomb repressive deubiquitinase (PR-DUB) complex, a complex that specifically mediates deubiquitination of histone H2A monoubiquitinated at 'Lys-119' (H2AK118ub1). Mediates bisymmetric organization of the PR-DUB complex and is involved in association with nucleosomes to mediate deubiquitination. Does not deubiquitinate monoubiquitinated histone H2B. Required to maintain the transcriptionally repressive state of homeotic genes throughout development. The PR-DUB complex has weak or no activity toward 'Lys-48'- and 'Lys-63'-linked polyubiquitin chains. Polycomb group (PcG) protein. The polypeptide is Ubiquitin carboxyl-terminal hydrolase calypso (Drosophila yakuba (Fruit fly)).